Consider the following 266-residue polypeptide: Tryptophan synthase alpha chain (266 aa).

Active-site proton acceptor residues include Glu45 and Asp56.

The protein belongs to the TrpA family. Tetramer of two alpha and two beta chains.

The enzyme catalyses (1S,2R)-1-C-(indol-3-yl)glycerol 3-phosphate + L-serine = D-glyceraldehyde 3-phosphate + L-tryptophan + H2O. Its pathway is amino-acid biosynthesis; L-tryptophan biosynthesis; L-tryptophan from chorismate: step 5/5. The alpha subunit is responsible for the aldol cleavage of indoleglycerol phosphate to indole and glyceraldehyde 3-phosphate. The sequence is that of Tryptophan synthase alpha chain from Novosphingobium aromaticivorans (strain ATCC 700278 / DSM 12444 / CCUG 56034 / CIP 105152 / NBRC 16084 / F199).